The primary structure comprises 102 residues: Small ribosomal subunit protein uS10 (102 aa).

The protein belongs to the universal ribosomal protein uS10 family. In terms of assembly, part of the 30S ribosomal subunit.

Functionally, involved in the binding of tRNA to the ribosomes. The protein is Small ribosomal subunit protein uS10 of Thermobifida fusca (strain YX).